Reading from the N-terminus, the 593-residue chain is Transmembrane 9 superfamily member 4 (593 aa).

The first 25 residues, 1–25, serve as a signal peptide directing secretion; the sequence is MVLLPSMTSLLLVFLFLYGVSPVIS. The Lumenal segment spans residues 26-230; that stretch reads DGSDHRYKVG…SMPHHLEIHW (205 aa). The helical transmembrane segment at 231-251 threads the bilayer; that stretch reads FSIINSCVTVLLLTGFLATIL. The Cytoplasmic portion of the chain corresponds to 252–303; it reads MRVLKNDFVKYAHDEEAVDDQEETGWKLIHGDVFRFPKHKSLLAAALGSGTQ. Residues 304–324 form a helical membrane-spanning segment; the sequence is LFTLAVFIFMLALVGVFYPYN. The Lumenal segment spans residues 325–326; that stretch reads RG. Residues 327–347 form a helical membrane-spanning segment; that stretch reads ALFTALVVIYALTSGIAGYTA. Residues 348–366 lie on the Cytoplasmic side of the membrane; sequence ASFYCQLEGTNWVRNVILT. The chain crosses the membrane as a helical span at residues 367-387; it reads GSLFCGPLLITFSFLNTVAIA. The Lumenal portion of the chain corresponds to 388–398; sequence YQATAALPFGT. A helical membrane pass occupies residues 399-419; it reads IVVIFLIWALVTSPLLILGGI. The Cytoplasmic portion of the chain corresponds to 420–453; the sequence is AGKNRKSEFQAPCRTTKYPREIPPMRWYRRTLPQ. Residues 454–474 traverse the membrane as a helical segment; the sequence is MAMAGFLPFSAIYIELYYIFA. Topologically, residues 475 to 486 are lumenal; sequence SVWGHRIYTIYS. Residues 487–507 traverse the membrane as a helical segment; it reads ILSIVFLILVIVTAFITVALT. The Cytoplasmic segment spans residues 508–522; the sequence is YFQLAAEDHEWWWRS. A helical transmembrane segment spans residues 523–543; that stretch reads LLCGGSTGLFIYAYCLYYYYA. Residues 544–554 are Lumenal-facing; the sequence is RSDMSGFMQTS. The helical transmembrane segment at 555–575 threads the bilayer; it reads FFFGYMACICYGFFLMLGTIG. Over 576 to 593 the chain is Cytoplasmic; that stretch reads FCASLLFVRHIYRSIKCE. Residues 582–587 carry the Endoplasmic reticulum export signal motif; the sequence is FVRHIY. The Golgi retention signal motif lies at 591–593; sequence KCE.

Belongs to the nonaspanin (TM9SF) (TC 9.A.2) family.

It is found in the endosome membrane. Its subcellular location is the golgi apparatus membrane. This Arabidopsis thaliana (Mouse-ear cress) protein is Transmembrane 9 superfamily member 4.